A 379-amino-acid chain; its full sequence is Dual-specificity RNA methyltransferase RlmN (379 aa).

The active-site Proton acceptor is Glu90. In terms of domain architecture, Radical SAM core spans 96 to 348; the sequence is EPNRGTLCVS…TTVRKTRGDD (253 aa). An intrachain disulfide couples Cys103 to Cys353. Positions 110, 114, and 117 each coordinate [4Fe-4S] cluster. S-adenosyl-L-methionine is bound by residues 179–180, Ser211, 233–235, and Asn310; these read GE and SLH. Cys353 serves as the catalytic S-methylcysteine intermediate.

This sequence belongs to the radical SAM superfamily. RlmN family. The cofactor is [4Fe-4S] cluster.

It localises to the cytoplasm. It carries out the reaction adenosine(2503) in 23S rRNA + 2 reduced [2Fe-2S]-[ferredoxin] + 2 S-adenosyl-L-methionine = 2-methyladenosine(2503) in 23S rRNA + 5'-deoxyadenosine + L-methionine + 2 oxidized [2Fe-2S]-[ferredoxin] + S-adenosyl-L-homocysteine. The enzyme catalyses adenosine(37) in tRNA + 2 reduced [2Fe-2S]-[ferredoxin] + 2 S-adenosyl-L-methionine = 2-methyladenosine(37) in tRNA + 5'-deoxyadenosine + L-methionine + 2 oxidized [2Fe-2S]-[ferredoxin] + S-adenosyl-L-homocysteine. In terms of biological role, specifically methylates position 2 of adenine 2503 in 23S rRNA and position 2 of adenine 37 in tRNAs. m2A2503 modification seems to play a crucial role in the proofreading step occurring at the peptidyl transferase center and thus would serve to optimize ribosomal fidelity. The protein is Dual-specificity RNA methyltransferase RlmN of Nitrosomonas eutropha (strain DSM 101675 / C91 / Nm57).